The sequence spans 556 residues: Arginine--tRNA ligase (556 aa).

The 'HIGH' region signature appears at Ala-132–His-142.

It belongs to the class-I aminoacyl-tRNA synthetase family. Monomer.

The protein resides in the cytoplasm. The enzyme catalyses tRNA(Arg) + L-arginine + ATP = L-arginyl-tRNA(Arg) + AMP + diphosphate. The protein is Arginine--tRNA ligase of Shouchella clausii (strain KSM-K16) (Alkalihalobacillus clausii).